We begin with the raw amino-acid sequence, 244 residues long: tRNA1(Val) (adenine(37)-N6)-methyltransferase (244 aa).

Belongs to the methyltransferase superfamily. tRNA (adenine-N(6)-)-methyltransferase family.

It is found in the cytoplasm. The enzyme catalyses adenosine(37) in tRNA1(Val) + S-adenosyl-L-methionine = N(6)-methyladenosine(37) in tRNA1(Val) + S-adenosyl-L-homocysteine + H(+). Functionally, specifically methylates the adenine in position 37 of tRNA(1)(Val) (anticodon cmo5UAC). This chain is tRNA1(Val) (adenine(37)-N6)-methyltransferase, found in Photorhabdus laumondii subsp. laumondii (strain DSM 15139 / CIP 105565 / TT01) (Photorhabdus luminescens subsp. laumondii).